We begin with the raw amino-acid sequence, 139 residues long: Immunogenic miracidial antigen 8I' (139 aa).

The segment at 61–139 (IDVGDEDYHD…PKKYGSGYKH (79 aa)) is disordered. The segment covering 64-85 (GDEDYHDGDDDVDYTDDVDDVD) has biased composition (acidic residues). Over residues 90 to 103 (SPSQLLQGGYQRNQ) the composition is skewed to polar residues.

The protein belongs to the immunogenic miracidial antigen family.

This Schistosoma japonicum (Blood fluke) protein is Immunogenic miracidial antigen 8I' (8I').